The sequence spans 769 residues: Serine protease HtrA-like (769 aa).

Over residues 1–20 (MDIGKKHVIPKSQYRRKRRE) the composition is skewed to basic residues. Disordered regions lie at residues 1–287 (MDIG…DKDN) and 324–390 (EDKH…KGRA). Basic and acidic residues-rich tracts occupy residues 21-64 (FFHN…ERFK) and 71-108 (LEQRNRDVNENKAEESKSNQDSKSAYNRDHYLTDDVSK). Over residues 126-137 (YEQNSEATLSTK) the composition is skewed to polar residues. Residues 138–186 (STDKVESTEMRKLSSDKNKVGHEEQHVLSKPSEHDKETRIDSESSRTDS) are compositionally biased toward basic and acidic residues. Polar residues predominate over residues 247–262 (QQSQNEQTKTYTYGDS). Positions 264 to 287 (QNDKSNHENDLSHHTPSISDDKDN) are enriched in basic and acidic residues. Residues 331–347 (ADSSETVGYQSQSTASH) show a composition bias toward polar residues. Residues 348–364 (RSTEKRNISINDHDKLN) show a composition bias toward basic and acidic residues. A compositionally biased stretch (polar residues) spans 365–390 (GQKTNTKTSANNNQKKATSKLNKGRA). A helical membrane pass occupies residues 410–430 (LVILMGIIILIVILNAIFNNV). Catalysis depends on charge relay system residues His-504, Asp-534, and Ser-619. Residues 680–733 (IASLNSFERQAVKLPGKVKNGVVVDQVDNNGLADQSGLKKGDVITELDGKLLED) enclose the PDZ domain.

It belongs to the peptidase S1C family.

It localises to the cell membrane. In Staphylococcus aureus (strain N315), this protein is Serine protease HtrA-like.